The sequence spans 370 residues: 3-hydroxy-3-methylglutaryl-CoA lyase, cytoplasmic (370 aa).

Residue G2 is the site of N-myristoyl glycine attachment. One can recognise a Pyruvate carboxyltransferase domain in the interval 78-345 (VKIVEVGPRD…NTGVNLYKVM (268 aa)). R86 contributes to the substrate binding site. Positions 87, 278, and 280 each coordinate a divalent metal cation. C311 is a catalytic residue. N320 contacts a divalent metal cation.

This sequence belongs to the HMG-CoA lyase family. A divalent metal cation is required as a cofactor.

It is found in the cytoplasm. Its subcellular location is the cytosol. The protein localises to the endoplasmic reticulum membrane. The enzyme catalyses (3S)-3-hydroxy-3-methylglutaryl-CoA = acetoacetate + acetyl-CoA. It participates in metabolic intermediate metabolism; (S)-3-hydroxy-3-methylglutaryl-CoA degradation; acetoacetate from (S)-3-hydroxy-3-methylglutaryl-CoA: step 1/1. Functionally, non-mitochondrial 3-hydroxy-3-methylglutaryl-CoA lyase that catalyzes a cation-dependent cleavage of (S)-3-hydroxy-3-methylglutaryl-CoA into acetyl-CoA and acetoacetate, a key step in ketogenesis, the products of which support energy production in nonhepatic animal tissues. This chain is 3-hydroxy-3-methylglutaryl-CoA lyase, cytoplasmic (HMGCLL1), found in Homo sapiens (Human).